Here is a 236-residue protein sequence, read N- to C-terminus: 2-C-methyl-D-erythritol 4-phosphate cytidylyltransferase (236 aa).

The protein belongs to the IspD/TarI cytidylyltransferase family. IspD subfamily.

It carries out the reaction 2-C-methyl-D-erythritol 4-phosphate + CTP + H(+) = 4-CDP-2-C-methyl-D-erythritol + diphosphate. It participates in isoprenoid biosynthesis; isopentenyl diphosphate biosynthesis via DXP pathway; isopentenyl diphosphate from 1-deoxy-D-xylulose 5-phosphate: step 2/6. Catalyzes the formation of 4-diphosphocytidyl-2-C-methyl-D-erythritol from CTP and 2-C-methyl-D-erythritol 4-phosphate (MEP). The sequence is that of 2-C-methyl-D-erythritol 4-phosphate cytidylyltransferase from Burkholderia multivorans (strain ATCC 17616 / 249).